Consider the following 254-residue polypeptide: Undecaprenyl-diphosphatase (254 aa).

8 helical membrane-spanning segments follow: residues 1–21 (MGIIESIILGIVEGLTEFLPV), 41–61 (AHKAFEVAIQSGAILAVVFLY), 75–95 (LIIAFIPTGILGFLLYKIIKG), 96–116 (LFSPYIVSIMLIVGGLVFIAV), 130–150 (ILKIPYYKAFFIGVFQSIAMI), 174–194 (AEFSFLLAVPTMFAATSYDIM), 210–230 (TGFVTAFVFAVLAIKLFIGFV), and 234–254 (NFVPFGIYRIILGFIFLLFVL).

The protein belongs to the UppP family.

Its subcellular location is the cell inner membrane. It catalyses the reaction di-trans,octa-cis-undecaprenyl diphosphate + H2O = di-trans,octa-cis-undecaprenyl phosphate + phosphate + H(+). Its function is as follows. Catalyzes the dephosphorylation of undecaprenyl diphosphate (UPP). Confers resistance to bacitracin. The chain is Undecaprenyl-diphosphatase from Persephonella marina (strain DSM 14350 / EX-H1).